The following is a 424-amino-acid chain: Neurotensin receptor type 1 (424 aa).

Residues 1-23 form a disordered region; the sequence is MHLNSSVPQGTPGEPDAQPFSGP. The Extracellular portion of the chain corresponds to 1–68; that stretch reads MHLNSSVPQG…TDIYSKVLVT (68 aa). Residues asparagine 4, asparagine 38, and asparagine 42 are each glycosylated (N-linked (GlcNAc...) asparagine). A helical membrane pass occupies residues 69 to 89; that stretch reads AIYLALFVVGTVGNSVTAFTL. Over 90–103 the chain is Cytoplasmic; that stretch reads ARKKSLQSLQSTVH. Residues 104–123 form a helical membrane-spanning segment; that stretch reads YHLGSLALSDLLILLLAMPV. Residues 124 to 143 lie on the Extracellular side of the membrane; the sequence is ELYNFIWVHHPWAFGDAGCR. The cysteines at positions 142 and 225 are disulfide-linked. The chain crosses the membrane as a helical span at residues 144 to 165; it reads GYYFLRDACTYATALNVASLSV. At 166–185 the chain is on the cytoplasmic side; sequence ERYLAICHPFKAKTLMSRSR. Residues 186–206 traverse the membrane as a helical segment; sequence TKKFISAIWLASALLAIPMLF. The Extracellular segment spans residues 207–235; sequence TMGLQNRSGDGTHPGGLVCTPIVDTATVK. The chain crosses the membrane as a helical span at residues 236 to 260; it reads VVIQVNTFMSFLFPMLVISILNTVI. The Cytoplasmic portion of the chain corresponds to 261 to 308; the sequence is ANKLTVMVHQAAEQGRVCTVGTHNGLEHSTFNMTIEPGRVQALRHGVL. A helical transmembrane segment spans residues 309-330; sequence VLRAVVIAFVVCWLPYHVRRLM. The interval 326–349 is neurotensin binding; the sequence is VRRLMFCYISDEQWTTFLFDFYHY. The Extracellular portion of the chain corresponds to 331-348; the sequence is FCYISDEQWTTFLFDFYH. Residues 349 to 369 form a helical membrane-spanning segment; that stretch reads YFYMLTNALFYVSSAINPILY. The Cytoplasmic segment spans residues 370–424; that stretch reads NLVSANFRQVFLSTLACLCPGWRHRRKKRPTFSRKPNSMSSNHAFSTSATRETLY. Residues cysteine 386 and cysteine 388 are each lipidated (S-palmitoyl cysteine). A disordered region spans residues 397 to 424; sequence KRPTFSRKPNSMSSNHAFSTSATRETLY. The span at 403–424 shows a compositional bias: polar residues; it reads RKPNSMSSNHAFSTSATRETLY.

Belongs to the G-protein coupled receptor 1 family. Neurotensin receptor subfamily. NTSR1 sub-subfamily. In terms of assembly, interacts (palmitoylated form) with GNA11. In terms of processing, N-glycosylated. Post-translationally, palmitoylated; this is required for normal localization at membrane rafts and normal GNA11-mediated activation of down-stream signaling cascades. The palmitoylation level increases in response to neurotensin treatment. As to expression, detected in brain and small intestine.

Its subcellular location is the cell membrane. It localises to the membrane raft. Its function is as follows. G-protein coupled receptor for the tridecapeptide neurotensin (NTS). Signaling is effected via G proteins that activate a phosphatidylinositol-calcium second messenger system. Signaling leads to the activation of downstream MAP kinases and protects cells against apoptosis. The chain is Neurotensin receptor type 1 (Ntsr1) from Rattus norvegicus (Rat).